The following is a 297-amino-acid chain: Light-independent protochlorophyllide reductase iron-sulfur ATP-binding protein (297 aa).

Residues 41-46 and Lys70 contribute to the ATP site; that span reads GIGKST. Mg(2+) is bound at residue Ser45. Cys126 and Cys160 together coordinate [4Fe-4S] cluster. ATP contacts are provided by residues 211 to 212 and 235 to 237; these read NR and PDL.

Belongs to the NifH/BchL/ChlL family. As to quaternary structure, homodimer. Protochlorophyllide reductase is composed of three subunits; BchL, BchN and BchB. [4Fe-4S] cluster is required as a cofactor.

The catalysed reaction is chlorophyllide a + oxidized 2[4Fe-4S]-[ferredoxin] + 2 ADP + 2 phosphate = protochlorophyllide a + reduced 2[4Fe-4S]-[ferredoxin] + 2 ATP + 2 H2O. It participates in porphyrin-containing compound metabolism; bacteriochlorophyll biosynthesis (light-independent). In terms of biological role, component of the dark-operative protochlorophyllide reductase (DPOR) that uses Mg-ATP and reduced ferredoxin to reduce ring D of protochlorophyllide (Pchlide) to form chlorophyllide a (Chlide). This reaction is light-independent. The L component serves as a unique electron donor to the NB-component of the complex, and binds Mg-ATP. This is Light-independent protochlorophyllide reductase iron-sulfur ATP-binding protein from Cereibacter sphaeroides (strain KD131 / KCTC 12085) (Rhodobacter sphaeroides).